An 83-amino-acid chain; its full sequence is Cobrotoxin homolog (83 aa).

The N-terminal stretch at 1 to 21 (METLLLTLLVVTIVCLDLGYT) is a signal peptide. Disulfide bonds link C24–C45, C38–C62, C64–C75, and C76–C81.

This sequence belongs to the three-finger toxin family. Short-chain subfamily. Type I alpha-neurotoxin sub-subfamily. In terms of tissue distribution, expressed by the venom gland.

The protein localises to the secreted. Binds to muscle nicotinic acetylcholine receptor (nAChR) and inhibit acetylcholine from binding to the receptor, thereby impairing neuromuscular transmission. This chain is Cobrotoxin homolog, found in Naja naja (Indian cobra).